Reading from the N-terminus, the 321-residue chain is uncharacterized protein (321 aa).

Residues 1–12 (MQGGREVGRESV) are compositionally biased toward basic and acidic residues. A disordered region spans residues 1–85 (MQGGREVGRE…GWGEFEGFQE (85 aa)). A compositionally biased stretch (polar residues) spans 53–67 (NANSSRLDEGLSSSR).

This is an uncharacterized protein from Rattus norvegicus (Rat).